Here is a 328-residue protein sequence, read N- to C-terminus: Gonadotropin-releasing hormone receptor (328 aa).

The Extracellular portion of the chain corresponds to 1-38 (MANSASPEQNQNHCSAINNSIPLMQGNLPTLTLSGKIR). N-linked (GlcNAc...) asparagine glycosylation occurs at Asn18. Residues 39–58 (VTVTFFLFLLSATFNASFLL) form a helical membrane-spanning segment. Over 59–77 (KLQKWTQKKEKGKKLSRMK) the chain is Cytoplasmic. A helical transmembrane segment spans residues 78–97 (LLLKHLTLANLLETLIVMPL). At 98 to 115 (DGMWNITVQWYAGELLCK) the chain is on the extracellular side. The N-linked (GlcNAc...) asparagine glycan is linked to Asn102. Residues Cys114 and Cys196 are joined by a disulfide bond. A helical transmembrane segment spans residues 116-137 (VLSYLKLFSMYAPAFMMVVISL). Over 138–164 (DRSLAITRPLALKSNSKVGQSMVGLAW) the chain is Cytoplasmic. A helical membrane pass occupies residues 165–184 (ILSSVFAGPQLYIFRMIHLA). Residues 185–212 (DSSGQTKVFSQCVTHCSFSQWWHQAFYN) lie on the Extracellular side of the membrane. The chain crosses the membrane as a helical span at residues 213–232 (FFTFSCLFIIPLFIMLICNA). The Cytoplasmic portion of the chain corresponds to 233-281 (KIIFTLTRVLHQDPHELQLNQSKNNIPRARLKTLKMTVAFATSFTVCWT). Residues 282–300 (PYYVLGIWYWFDPEMLNRL) traverse the membrane as a helical segment. The Extracellular segment spans residues 301–306 (SDPVNH). Residues 307-326 (FFFLFAFLNPCFDPLIYGYF) traverse the membrane as a helical segment. The Cytoplasmic segment spans residues 327–328 (SL).

Belongs to the G-protein coupled receptor 1 family. As to expression, pituitary, ovary, testis, breast and prostate but not in liver and spleen.

It is found in the cell membrane. Its function is as follows. Receptor for gonadotropin releasing hormone (GnRH) that mediates the action of GnRH to stimulate the secretion of the gonadotropic hormones luteinizing hormone (LH) and follicle-stimulating hormone (FSH). This receptor mediates its action by association with G-proteins that activate a phosphatidylinositol-calcium second messenger system. Isoform 2 may act as an inhibitor of GnRH-R signaling. The sequence is that of Gonadotropin-releasing hormone receptor (GNRHR) from Homo sapiens (Human).